Consider the following 197-residue polypeptide: MKKLFLIIGAPGSGKTTDASIIAEKHPDRIVHYSTGDMLREEVASGSELGKTIESYIAKGALVPLNIIIDTIVSAIKHAPVDTILIDGYPRSEEQMTAFDELVSKEDDIDLVSVIEVRVSEEVARERILGRRAEAAPGEERSDDSEEVFNDRMKIYTDPLGAIQRFYTDKGLLTIINGERTLDEVVDEMEKFVLSKI.

12–17 (GSGKTT) is an ATP binding site. The interval 34-63 (STGDMLREEVASGSELGKTIESYIAKGALV) is NMP. AMP is bound by residues threonine 35, arginine 40, 61 to 63 (ALV), 88 to 91 (GYPR), and glutamine 95. The segment at 130-144 (GRRAEAAPGEERSDD) is LID. ATP is bound at residue arginine 131. Residues arginine 141 and arginine 152 each contribute to the AMP site. Residue arginine 180 coordinates ATP.

It belongs to the adenylate kinase family. Monomer.

It is found in the cytoplasm. It carries out the reaction AMP + ATP = 2 ADP. Its pathway is purine metabolism; AMP biosynthesis via salvage pathway; AMP from ADP: step 1/1. In terms of biological role, catalyzes the reversible transfer of the terminal phosphate group between ATP and AMP. Plays an important role in cellular energy homeostasis and in adenine nucleotide metabolism. This chain is Adenylate kinase, found in Sulfurovum sp. (strain NBC37-1).